Reading from the N-terminus, the 424-residue chain is UPF0053 protein MG146 homolog (424 aa).

Residues 6 to 191 (SGGLLALIII…EQNGLFTKED (186 aa)) form the CNNM transmembrane domain. The next 4 helical transmembrane spans lie at 7 to 27 (GGLL…SAVV), 71 to 91 (LITI…ILFL), 101 to 121 (AISS…LCEI), and 135 to 155 (LVYF…ITKL). CBS domains are found at residues 210 to 270 (MIKW…NEPF) and 275 to 335 (LLYP…EHDE).

This sequence belongs to the UPF0053 family.

Its subcellular location is the cell membrane. In Mycoplasma pneumoniae (strain ATCC 29342 / M129 / Subtype 1) (Mycoplasmoides pneumoniae), this protein is UPF0053 protein MG146 homolog.